The sequence spans 164 residues: Large ribosomal subunit protein uL11 (164 aa).

The protein belongs to the universal ribosomal protein uL11 family. Part of the ribosomal stalk of the 50S ribosomal subunit. Interacts with L10 and the large rRNA to form the base of the stalk. L10 forms an elongated spine to which L12 dimers bind in a sequential fashion forming a multimeric L10(L12)X complex.

Functionally, forms part of the ribosomal stalk which helps the ribosome interact with GTP-bound translation factors. The sequence is that of Large ribosomal subunit protein uL11 from Pyrococcus abyssi (strain GE5 / Orsay).